The primary structure comprises 631 residues: Chaperone protein HtpG (631 aa).

Residues 1–342 are a; substrate-binding; it reads MSEQTANKET…SNDLPLNVSR (342 aa). The interval 343-559 is b; that stretch reads EILQDNKVTQ…DFEMGTQMAK (217 aa). A c region spans residues 560–631; that stretch reads LLEAAGQAAP…LSAMNQLLAK (72 aa).

This sequence belongs to the heat shock protein 90 family. In terms of assembly, homodimer.

It localises to the cytoplasm. In terms of biological role, molecular chaperone. Has ATPase activity. The sequence is that of Chaperone protein HtpG from Aliivibrio fischeri (strain ATCC 700601 / ES114) (Vibrio fischeri).